A 206-amino-acid chain; its full sequence is ATP phosphoribosyltransferase (206 aa).

The protein belongs to the ATP phosphoribosyltransferase family. Short subfamily. Heteromultimer composed of HisG and HisZ subunits.

It localises to the cytoplasm. It carries out the reaction 1-(5-phospho-beta-D-ribosyl)-ATP + diphosphate = 5-phospho-alpha-D-ribose 1-diphosphate + ATP. The protein operates within amino-acid biosynthesis; L-histidine biosynthesis; L-histidine from 5-phospho-alpha-D-ribose 1-diphosphate: step 1/9. Functionally, catalyzes the condensation of ATP and 5-phosphoribose 1-diphosphate to form N'-(5'-phosphoribosyl)-ATP (PR-ATP). Has a crucial role in the pathway because the rate of histidine biosynthesis seems to be controlled primarily by regulation of HisG enzymatic activity. The polypeptide is ATP phosphoribosyltransferase (Wolinella succinogenes (strain ATCC 29543 / DSM 1740 / CCUG 13145 / JCM 31913 / LMG 7466 / NCTC 11488 / FDC 602W) (Vibrio succinogenes)).